The primary structure comprises 200 residues: Pyridoxine/pyridoxamine 5'-phosphate oxidase (200 aa).

FMN contacts are provided by residues 48-53 (RMVLLK), 63-64 (YT), K70, and Q92. Substrate is bound at residue K53. Residues Y110, R114, and S118 each coordinate substrate. FMN-binding positions include 127–128 (QS) and W171. 177-179 (RLH) is a substrate binding site. R181 is an FMN binding site.

This sequence belongs to the pyridoxamine 5'-phosphate oxidase family. In terms of assembly, homodimer. FMN serves as cofactor.

The catalysed reaction is pyridoxamine 5'-phosphate + O2 + H2O = pyridoxal 5'-phosphate + H2O2 + NH4(+). It carries out the reaction pyridoxine 5'-phosphate + O2 = pyridoxal 5'-phosphate + H2O2. Its pathway is cofactor metabolism; pyridoxal 5'-phosphate salvage; pyridoxal 5'-phosphate from pyridoxamine 5'-phosphate: step 1/1. The protein operates within cofactor metabolism; pyridoxal 5'-phosphate salvage; pyridoxal 5'-phosphate from pyridoxine 5'-phosphate: step 1/1. Its function is as follows. Catalyzes the oxidation of either pyridoxine 5'-phosphate (PNP) or pyridoxamine 5'-phosphate (PMP) into pyridoxal 5'-phosphate (PLP). The sequence is that of Pyridoxine/pyridoxamine 5'-phosphate oxidase from Cereibacter sphaeroides (strain ATCC 17029 / ATH 2.4.9) (Rhodobacter sphaeroides).